Consider the following 414-residue polypeptide: Gamma-glutamyl phosphate reductase (414 aa).

The protein belongs to the gamma-glutamyl phosphate reductase family.

The protein resides in the cytoplasm. The catalysed reaction is L-glutamate 5-semialdehyde + phosphate + NADP(+) = L-glutamyl 5-phosphate + NADPH + H(+). It participates in amino-acid biosynthesis; L-proline biosynthesis; L-glutamate 5-semialdehyde from L-glutamate: step 2/2. Its function is as follows. Catalyzes the NADPH-dependent reduction of L-glutamate 5-phosphate into L-glutamate 5-semialdehyde and phosphate. The product spontaneously undergoes cyclization to form 1-pyrroline-5-carboxylate. This is Gamma-glutamyl phosphate reductase from Bacillus anthracis (strain A0248).